The chain runs to 90 residues: U7-theraphotoxin-Hhn1a 8 (90 aa).

The first 19 residues, 1–19 (MKTAIFTVVLALAVFAVLS), serve as a signal peptide directing secretion. Residues 20–50 (FGWEANEKALSEEFTELIHEKGAASETEARE) constitute a propeptide that is removed on maturation. Intrachain disulfides connect Cys-51–Cys-65, Cys-58–Cys-70, and Cys-64–Cys-81.

This sequence belongs to the neurotoxin 10 (Hwtx-1) family. 13 (Hntx-13) subfamily. As to expression, expressed by the venom gland.

It is found in the secreted. Its function is as follows. Ion channel inhibitor. In Cyriopagopus hainanus (Chinese bird spider), this protein is U7-theraphotoxin-Hhn1a 8.